We begin with the raw amino-acid sequence, 490 residues long: Glutamyl-tRNA(Gln) amidotransferase subunit A (490 aa).

Catalysis depends on charge relay system residues Lys78 and Ser158. Residue Ser182 is the Acyl-ester intermediate of the active site.

It belongs to the amidase family. GatA subfamily. Heterotrimer of A, B and C subunits.

It catalyses the reaction L-glutamyl-tRNA(Gln) + L-glutamine + ATP + H2O = L-glutaminyl-tRNA(Gln) + L-glutamate + ADP + phosphate + H(+). Allows the formation of correctly charged Gln-tRNA(Gln) through the transamidation of misacylated Glu-tRNA(Gln) in organisms which lack glutaminyl-tRNA synthetase. The reaction takes place in the presence of glutamine and ATP through an activated gamma-phospho-Glu-tRNA(Gln). In Caulobacter sp. (strain K31), this protein is Glutamyl-tRNA(Gln) amidotransferase subunit A.